We begin with the raw amino-acid sequence, 1092 residues long: MAAYSWWRQPSWMVDNKRSRMTPNLPWLLSALTLLHLTMHANGLKRGVQDLKCTTNNMRVWDCTWPAPLGVSPGTVKDICIKDRFHSCHPLETTNVKIPALSPGDHEVTINYLNGFQSKFTLNEKDVSLIPETPEILDLSADFFTSSLLLKWNDRGSALPHPSNATWEIKVLQNPRTEPVALVLLNTMLSGKDTVQHWNWTSDLPLQCATHSVSIRWHIDSPHFSGYKEWSDWSPLKNISWIRNTETNVFPQDKVVLAGSNMTICCMSPTKVLSGQIGNTLRPLIHLYGQTVAIHILNIPVSENSGTNIIFITDDDVYGTVVFAGYPPDVPQKLSCETHDLKEIICSWNPGRITGLVGPRNTEYTLFESISGKSAVFHRIEGLTNETYRLGVQMHPGQEIHNFTLTGRNPLGQAQSAVVINVTERVAPHDPTSLKVKDINSTVVTFSWYLPGNFTKINLLCQIEICKANSKKEVRNATIRGAEDSTYHVAVDKLNPYTAYTFRVRCSSKTFWKWSRWSDEKRHLTTEATPSKGPDTWREWSSDGKNLIVYWKPLPINEANGKILSYNVSCSLNEETQSVLEIFDPQHRAEIQLSKNDYIISVVARNSAGSSPPSKIASMEIPNDDITVEQAVGLGNRIFLTWRHDPNMTCDYVIKWCNSSRSEPCLLDWRKVPSNSTETVIESDQFQPGVRYNFYLYGCTNQGYQLLRSIIGYVEELAPIVAPNFTVEDTSADSILVKWDDIPVEELRGFLRGYLFYFQKGERDTPKTRSLEPHHSDIKLKNITDISQKTLRIADLQGKTSYHLVLRAYTHGGLGPEKSMFVVTKENSVGLIIAILIPVAVAVIVGVVTSILCYRKREWIKETFYPDIPNPENCKALQFQKSVCEGSNALKTLEMNPCTPNNVEVLESRSIVPKIEDTEIISPVAERPGERSEVDPENHVVVSYCPPIIEEEITNPAADEVGGASQVVYIDVQSMYQPQAKAEEEQDVDPVVVAGYKPQMRLPISPAVEDTAAEDEEGKTAGYRPQANVNTWNLVSPDSPRSTDSNNEVVSFGSPCSINSRQFLIPPKDEDSPKSNGGGWSFTNFFQNKPND.

The signal sequence occupies residues 1–43 (MAAYSWWRQPSWMVDNKRSRMTPNLPWLLSALTLLHLTMHANG). Topologically, residues 44-828 (LKRGVQDLKC…SMFVVTKENS (785 aa)) are extracellular. The Fibronectin type-III 1 domain occupies 45–126 (KRGVQDLKCT…QSKFTLNEKD (82 aa)). 2 disulfide bridges follow: C53/C63 and C80/C88. N-linked (GlcNAc...) asparagine glycans are attached at residues N164, N199, N238, and N261. 2 disulfide bridges follow: C208–C265 and C336–C346. Fibronectin type-III domains lie at 330 to 429 (VPQK…VAPH), 430 to 529 (DPTS…TEAT), 533 to 624 (GPDT…IPND), 622 to 714 (PNDD…IGYV), and 719 to 828 (PIVA…KENS). N-linked (GlcNAc...) asparagine glycosylation is found at N385, N402, N421, N440, N453, and N476. The cysteines at positions 461 and 506 are disulfide-linked. Residues 514-518 (WSRWS) carry the WSXWS motif motif. 6 N-linked (GlcNAc...) asparagine glycosylation sites follow: N567, N647, N658, N675, N724, and N782. Residues 829–853 (VGLIIAILIPVAVAVIVGVVTSILC) form a helical membrane-spanning segment. Topologically, residues 854–1092 (YRKREWIKET…TNFFQNKPND (239 aa)) are cytoplasmic. The Box 1 motif signature appears at 864–872 (FYPDIPNPE). A phosphoserine mark is found at S922 and S1039. Residues 1009–1092 (EDTAAEDEEG…TNFFQNKPND (84 aa)) are disordered. Composition is skewed to polar residues over residues 1027–1062 (ANVN…NSRQ) and 1081–1092 (SFTNFFQNKPND).

The protein belongs to the type I cytokine receptor family. Type 2 subfamily. Heterodimer composed of LIFR and IL6ST. The heterodimer formed by LIFR and IL6ST interacts with the complex formed by CNTF and CNTFR. In terms of tissue distribution, placenta, liver, kidney, heart, lung, brain, and embryos. The liver may be the primary site of synthesis of the secreted form.

It is found in the cell membrane. Its subcellular location is the secreted. Signal-transducing molecule. May have a common pathway with IL6ST. The soluble form inhibits the biological activity of LIF by blocking its binding to receptors on target cells. The sequence is that of Leukemia inhibitory factor receptor (Lifr) from Mus musculus (Mouse).